We begin with the raw amino-acid sequence, 230 residues long: Potassium/proton antiporter CemA (230 aa).

Helical transmembrane passes span 7 to 27 (LPSL…SFSF), 106 to 126 (IILH…FFFL), 145 to 165 (LNDS…VGFH), and 181 to 201 (LGWA…PVIL).

This sequence belongs to the CemA family.

Its subcellular location is the plastid. The protein localises to the chloroplast inner membrane. It carries out the reaction K(+)(in) + H(+)(out) = K(+)(out) + H(+)(in). Its function is as follows. Contributes to K(+)/H(+) antiport activity by supporting proton efflux to control proton extrusion and homeostasis in chloroplasts in a light-dependent manner to modulate photosynthesis. Prevents excessive induction of non-photochemical quenching (NPQ) under continuous-light conditions. Indirectly promotes efficient inorganic carbon uptake into chloroplasts. This is Potassium/proton antiporter CemA from Lolium perenne (Perennial ryegrass).